We begin with the raw amino-acid sequence, 268 residues long: MHELLLFASVPAHQHHELLQQLAGLTAMQPQHRLERRLVFKAYRKPGLVNVRVGASQDLQGAELQRLNKMLNGGMFYTQVVGPVSEADFGAPASPVADQDAHMSGTDEKLSVRTHYYDYENQPWKLEFRDIPEAATRSAVTARLMSSASLPKGDITVPMNAWGYNFVTEYAVEGDIFIHNDIVIFLHRVLHYPTESQEPRRQLPALNEMTPLDRSGGYVLQAAITVQDGGNQETMKIASQHLFGLREQLKSAVRLEQADRLSLDTRAK.

This sequence belongs to the Mediator complex subunit 18 family. Component of the Mediator complex.

It is found in the nucleus. In terms of biological role, component of the Mediator complex, a coactivator involved in the regulated transcription of nearly all RNA polymerase II-dependent genes. Mediator functions as a bridge to convey information from gene-specific regulatory proteins to the basal RNA polymerase II transcription machinery. Mediator is recruited to promoters by direct interactions with regulatory proteins and serves as a scaffold for the assembly of a functional preinitiation complex with RNA polymerase II and the general transcription factors. This chain is Mediator of RNA polymerase II transcription subunit 18 (srb5), found in Neosartorya fischeri (strain ATCC 1020 / DSM 3700 / CBS 544.65 / FGSC A1164 / JCM 1740 / NRRL 181 / WB 181) (Aspergillus fischerianus).